The following is a 372-amino-acid chain: Queuine tRNA-ribosyltransferase (372 aa).

The active-site Proton acceptor is Asp-89. Substrate-binding positions include 89–93, Asp-161, and Gly-232; that span reads DSGGF. Positions 262–268 are RNA binding; sequence GIGDLPS. Asp-281 serves as the catalytic Nucleophile. The segment at 286 to 290 is RNA binding; important for wobble base 34 recognition; that stretch reads TKAAR. Residues Cys-319, Cys-321, Cys-324, and His-351 each coordinate Zn(2+).

This sequence belongs to the queuine tRNA-ribosyltransferase family. In terms of assembly, homodimer. Within each dimer, one monomer is responsible for RNA recognition and catalysis, while the other monomer binds to the replacement base PreQ1. The cofactor is Zn(2+).

It carries out the reaction 7-aminomethyl-7-carbaguanine + guanosine(34) in tRNA = 7-aminomethyl-7-carbaguanosine(34) in tRNA + guanine. It participates in tRNA modification; tRNA-queuosine biosynthesis. Its function is as follows. Catalyzes the base-exchange of a guanine (G) residue with the queuine precursor 7-aminomethyl-7-deazaguanine (PreQ1) at position 34 (anticodon wobble position) in tRNAs with GU(N) anticodons (tRNA-Asp, -Asn, -His and -Tyr). Catalysis occurs through a double-displacement mechanism. The nucleophile active site attacks the C1' of nucleotide 34 to detach the guanine base from the RNA, forming a covalent enzyme-RNA intermediate. The proton acceptor active site deprotonates the incoming PreQ1, allowing a nucleophilic attack on the C1' of the ribose to form the product. After dissociation, two additional enzymatic reactions on the tRNA convert PreQ1 to queuine (Q), resulting in the hypermodified nucleoside queuosine (7-(((4,5-cis-dihydroxy-2-cyclopenten-1-yl)amino)methyl)-7-deazaguanosine). The sequence is that of Queuine tRNA-ribosyltransferase from Chlamydia caviae (strain ATCC VR-813 / DSM 19441 / 03DC25 / GPIC) (Chlamydophila caviae).